The primary structure comprises 84 residues: ATP synthase subunit c (84 aa).

A run of 2 helical transmembrane segments spans residues 9–29 (IFGS…GFSL) and 54–74 (IVAG…LLFI).

It belongs to the ATPase C chain family. F-type ATPases have 2 components, F(1) - the catalytic core - and F(0) - the membrane proton channel. F(1) has five subunits: alpha(3), beta(3), gamma(1), delta(1), epsilon(1). F(0) has three main subunits: a(1), b(2) and c(10-14). The alpha and beta chains form an alternating ring which encloses part of the gamma chain. F(1) is attached to F(0) by a central stalk formed by the gamma and epsilon chains, while a peripheral stalk is formed by the delta and b chains.

It is found in the cell inner membrane. F(1)F(0) ATP synthase produces ATP from ADP in the presence of a proton or sodium gradient. F-type ATPases consist of two structural domains, F(1) containing the extramembraneous catalytic core and F(0) containing the membrane proton channel, linked together by a central stalk and a peripheral stalk. During catalysis, ATP synthesis in the catalytic domain of F(1) is coupled via a rotary mechanism of the central stalk subunits to proton translocation. In terms of biological role, key component of the F(0) channel; it plays a direct role in translocation across the membrane. A homomeric c-ring of between 10-14 subunits forms the central stalk rotor element with the F(1) delta and epsilon subunits. The sequence is that of ATP synthase subunit c from Histophilus somni (strain 2336) (Haemophilus somnus).